Consider the following 266-residue polypeptide: Glucosamine-6-phosphate deaminase (266 aa).

The Proton acceptor; for enolization step role is filled by D72. The active-site For ring-opening step is D141. H143 functions as the Proton acceptor; for ring-opening step in the catalytic mechanism. The For ring-opening step role is filled by E148.

It belongs to the glucosamine/galactosamine-6-phosphate isomerase family. NagB subfamily. Homohexamer.

The catalysed reaction is alpha-D-glucosamine 6-phosphate + H2O = beta-D-fructose 6-phosphate + NH4(+). It participates in amino-sugar metabolism; N-acetylneuraminate degradation; D-fructose 6-phosphate from N-acetylneuraminate: step 5/5. Allosterically activated by N-acetylglucosamine 6-phosphate (GlcNAc6P). Functionally, catalyzes the reversible isomerization-deamination of glucosamine 6-phosphate (GlcN6P) to form fructose 6-phosphate (Fru6P) and ammonium ion. In Yersinia pestis bv. Antiqua (strain Antiqua), this protein is Glucosamine-6-phosphate deaminase.